Consider the following 345-residue polypeptide: Anthranilate phosphoribosyltransferase (345 aa).

Residues glycine 80, glycine 83–aspartate 84, threonine 88, asparagine 90–threonine 93, lysine 108–serine 116, and serine 120 contribute to the 5-phospho-alpha-D-ribose 1-diphosphate site. Glycine 80 provides a ligand contact to anthranilate. A Mg(2+)-binding site is contributed by serine 92. Position 111 (asparagine 111) interacts with anthranilate. Position 166 (arginine 166) interacts with anthranilate. Positions 225 and 226 each coordinate Mg(2+).

The protein belongs to the anthranilate phosphoribosyltransferase family. As to quaternary structure, homodimer. Mg(2+) is required as a cofactor.

The enzyme catalyses N-(5-phospho-beta-D-ribosyl)anthranilate + diphosphate = 5-phospho-alpha-D-ribose 1-diphosphate + anthranilate. Its pathway is amino-acid biosynthesis; L-tryptophan biosynthesis; L-tryptophan from chorismate: step 2/5. Its function is as follows. Catalyzes the transfer of the phosphoribosyl group of 5-phosphorylribose-1-pyrophosphate (PRPP) to anthranilate to yield N-(5'-phosphoribosyl)-anthranilate (PRA). The protein is Anthranilate phosphoribosyltransferase of Desulforamulus reducens (strain ATCC BAA-1160 / DSM 100696 / MI-1) (Desulfotomaculum reducens).